Reading from the N-terminus, the 225-residue chain is UPF0700 transmembrane protein RA0705 (225 aa).

The next 6 membrane-spanning stretches (helical) occupy residues 17 to 37 (VGLA…AIGL), 66 to 86 (GLLL…GVMI), 95 to 115 (ALLF…QPEL), 117 to 137 (FVSL…IEGL), 168 to 188 (IIQI…AVLV), and 194 to 214 (LALW…FQIP).

Belongs to the UPF0700 family.

Its subcellular location is the cell membrane. This Rhizobium meliloti (strain 1021) (Ensifer meliloti) protein is UPF0700 transmembrane protein RA0705.